Reading from the N-terminus, the 697-residue chain is Sialic acid-binding Ig-like lectin 10 (697 aa).

Positions 1–16 are cleaved as a signal peptide; that stretch reads MLLPLLLSSLLGGSQA. The Extracellular portion of the chain corresponds to 17 to 550; it reads MDGRFWIRVQ…KGLISTAFSN (534 aa). In terms of domain architecture, Ig-like V-type spans 18 to 121; it reads DGRFWIRVQE…DESQYFFRVE (104 aa). 4 cysteine pairs are disulfide-bonded: Cys-36–Cys-173, Cys-41–Cys-101, Cys-164–Cys-215, and Cys-276–Cys-323. Residue Asn-100 is glycosylated (N-linked (GlcNAc...) asparagine). Arg-119 contributes to the N-acetylneuraminate binding site. Ig-like C2-type domains follow at residues 146 to 231, 251 to 339, and 344 to 441; these read PDVY…RTVR, PALE…LDLS, and PENL…LSLS. 2 N-linked (GlcNAc...) asparagine glycosylation sites follow: Asn-355 and Asn-364. A disulfide bond links Cys-380 and Cys-425. 2 N-linked (GlcNAc...) asparagine glycosylation sites follow: Asn-486 and Asn-504. Residues 551–571 form a helical membrane-spanning segment; the sequence is GAFLGIGITALLFLCLALIIM. The Cytoplasmic segment spans residues 572–697; that stretch reads KILPKRRTQT…QADYAEVKFQ (126 aa). The ITIM motif 1 signature appears at 595-600; that stretch reads LDYINV. Positions 606–697 are disordered; it reads PLAQKRNQKA…QADYAEVKFQ (92 aa). A compositionally biased stretch (pro residues) spans 620-629; that stretch reads PRTPLPPGAP. The span at 650–659 shows a compositional bias: polar residues; it reads KSSTQAPESQ. The short motif at 665 to 670 is the ITIM motif 2 element; sequence LHYATL. Tyr-667 is subject to Phosphotyrosine.

Belongs to the immunoglobulin superfamily. SIGLEC (sialic acid binding Ig-like lectin) family. As to quaternary structure, interacts with PTPN6/SHP-1 upon phosphorylation. Interacts with NCF1. Interacts with CD24; the probable CD24:SIGLEC10 complex is proposed to inhibit HGMB1-mediated tissue damage immune response. Interacts with HMGB1; the interaction is dependent on CD24. Interacts with RIGI, CBL and PTPN11. In terms of processing, phosphorylation of Tyr-667 is involved in binding to PTPN6. Expressed by peripheral blood leukocytes (eosinophils, monocytes and a natural killer cell subpopulation). Isoform 5 is found to be the most abundant isoform. Found in lymph node, lung, ovary and appendix. Isoform 1 is found at high levels and isoform 2 at lower levels in bone marrow, spleen and spinal cord. Isoform 2 is also found in brain. Isoform 4 is specifically found in natural killer cells.

The protein localises to the cell membrane. Its subcellular location is the secreted. In terms of biological role, putative adhesion molecule that mediates sialic-acid dependent binding to cells. Preferentially binds to alpha-2,3- or alpha-2,6-linked sialic acid. The sialic acid recognition site may be masked by cis interactions with sialic acids on the same cell surface. In the immune response, seems to act as an inhibitory receptor upon ligand induced tyrosine phosphorylation by recruiting cytoplasmic phosphatase(s) via their SH2 domain(s) that block signal transduction through dephosphorylation of signaling molecules. Involved in negative regulation of B-cell antigen receptor signaling. The inhibition of B cell activation is dependent on PTPN6/SHP-1. In association with CD24 may be involved in the selective suppression of the immune response to danger-associated molecular patterns (DAMPs) such as HMGB1, HSP70 and HSP90. In association with CD24 may regulate the immune repsonse of natural killer (NK) cells. Plays a role in the control of autoimmunity. During initiation of adaptive immune responses by CD8-alpha(+) dendritic cells inhibits cross-presentation by impairing the formation of MHC class I-peptide complexes. The function seems to implicate recruitment of PTPN6/SHP-1, which dephosphorylates NCF1 of the NADPH oxidase complex consequently promoting phagosomal acidification. In Homo sapiens (Human), this protein is Sialic acid-binding Ig-like lectin 10 (SIGLEC10).